A 229-amino-acid polypeptide reads, in one-letter code: Probable methylthioribulose-1-phosphate dehydratase (229 aa).

Cysteine 97 lines the substrate pocket. The Zn(2+) site is built by histidine 115 and histidine 117. Glutamate 139 functions as the Proton donor/acceptor in the catalytic mechanism. Residue histidine 195 participates in Zn(2+) binding.

This sequence belongs to the aldolase class II family. MtnB subfamily. Requires Zn(2+) as cofactor.

It localises to the cytoplasm. The catalysed reaction is 5-(methylsulfanyl)-D-ribulose 1-phosphate = 5-methylsulfanyl-2,3-dioxopentyl phosphate + H2O. It participates in amino-acid biosynthesis; L-methionine biosynthesis via salvage pathway; L-methionine from S-methyl-5-thio-alpha-D-ribose 1-phosphate: step 2/6. Functionally, catalyzes the dehydration of methylthioribulose-1-phosphate (MTRu-1-P) into 2,3-diketo-5-methylthiopentyl-1-phosphate (DK-MTP-1-P). The polypeptide is Probable methylthioribulose-1-phosphate dehydratase (Acyrthosiphon pisum (Pea aphid)).